We begin with the raw amino-acid sequence, 752 residues long: Translation initiation factor IF-2 (752 aa).

The span at 148–159 (KKVKDKNKKEEP) shows a compositional bias: basic and acidic residues. A disordered region spans residues 148–170 (KKVKDKNKKEEPAVTPSTAPRKK). Positions 250-419 (PRPPIVTVMG…ALQAEIMELK (170 aa)) constitute a tr-type G domain. Positions 259–266 (GHVDHGKT) are G1. A GTP-binding site is contributed by 259–266 (GHVDHGKT). Residues 284–288 (GITQH) are G2. A G3 region spans residues 305-308 (DTPG). GTP is bound by residues 305–309 (DTPGH) and 359–362 (NKID). The tract at residues 359-362 (NKID) is G4. Residues 395-397 (SAK) are G5.

The protein belongs to the TRAFAC class translation factor GTPase superfamily. Classic translation factor GTPase family. IF-2 subfamily.

It localises to the cytoplasm. Its function is as follows. One of the essential components for the initiation of protein synthesis. Protects formylmethionyl-tRNA from spontaneous hydrolysis and promotes its binding to the 30S ribosomal subunits. Also involved in the hydrolysis of GTP during the formation of the 70S ribosomal complex. The polypeptide is Translation initiation factor IF-2 (Thermodesulfovibrio yellowstonii (strain ATCC 51303 / DSM 11347 / YP87)).